Here is an 86-residue protein sequence, read N- to C-terminus: Mu-theraphotoxin-Hhn1d (86 aa).

An N-terminal signal peptide occupies residues 1–21 (MKASMFLALAGLALLFVVCYA). Positions 22-49 (SESEEKEFSNELLSSVLAVDDNSKGEER) are excised as a propeptide. Cystine bridges form between Cys-51/Cys-66, Cys-58/Cys-73, and Cys-65/Cys-80. Ile-84 carries the post-translational modification Isoleucine amide.

Belongs to the neurotoxin 10 (Hwtx-1) family. 22 (Htx-4) subfamily. Monomer. As to expression, expressed by the venom gland.

The protein localises to the secreted. In terms of biological role, neurotoxin. Selectively blocks neuronal tetrodotoxin-sensitive voltage-gated sodium channels (Nav). Does not affect tetrodotoxin-resistant voltage-gated sodium channels or calcium channels. The protein is Mu-theraphotoxin-Hhn1d of Cyriopagopus hainanus (Chinese bird spider).